Consider the following 321-residue polypeptide: Beta-ketoacyl-[acyl-carrier-protein] synthase III (321 aa).

Active-site residues include Cys-115 and His-248. The tract at residues 249–253 is ACP-binding; that stretch reads QANIR. Residue Asn-278 is part of the active site.

It belongs to the thiolase-like superfamily. FabH family. Homodimer.

It localises to the cytoplasm. It catalyses the reaction malonyl-[ACP] + acetyl-CoA + H(+) = 3-oxobutanoyl-[ACP] + CO2 + CoA. It participates in lipid metabolism; fatty acid biosynthesis. Catalyzes the condensation reaction of fatty acid synthesis by the addition to an acyl acceptor of two carbons from malonyl-ACP. Catalyzes the first condensation reaction which initiates fatty acid synthesis and may therefore play a role in governing the total rate of fatty acid production. Possesses both acetoacetyl-ACP synthase and acetyl transacylase activities. Its substrate specificity determines the biosynthesis of branched-chain and/or straight-chain of fatty acids. This chain is Beta-ketoacyl-[acyl-carrier-protein] synthase III, found in Azoarcus sp. (strain BH72).